The sequence spans 361 residues: Spermatogenesis-associated protein 17 (361 aa).

3 IQ domains span residues 32–61, 55–84, and 91–120; these read ENDAAVKIQSWFRGCQVRAYVRHLNRIVTI, LNRIVTIIQKWWRSFLGRKQYQLTVQVAYY, and YNAMAVRKQRRWRGYRVRKYLFNYYYLKEY.

It localises to the cytoplasm. The polypeptide is Spermatogenesis-associated protein 17 (SPATA17) (Macaca fascicularis (Crab-eating macaque)).